The primary structure comprises 1839 residues: Mannuronan C5-epimerase AlgE3 (1839 aa).

8 PbH1 repeats span residues 133–155 (DRDV…DPHE), 157–179 (TINL…VADY), 180–202 (QVGG…NIVT), 204–226 (TNDF…VVQR), 257–279 (THDV…RVYG), 280–302 (AQDV…YAEV), 320–342 (TTGT…GIQE), and 347–369 (TDYS…RLYG). The span at 372 to 386 (STVSEQPSSGQQATL) shows a compositional bias: polar residues. The segment at 372–392 (STVSEQPSSGQQATLEGTAGN) is disordered. 9 Hemolysin-type calcium-binding repeats span residues 387-399 (EGTA…SGTG), 406-422 (GLAG…DDTL), 424-440 (GGAG…ADTF), 538-550 (TGTE…SGTD), 557-573 (GYGG…NDIL), 574-591 (VGGA…ADVF), 695-709 (EGTD…TGAD), 714-730 (GLGG…DDVL), and 732-748 (GGAE…ADTF). PbH1 repeat units follow at residues 975–997 (DRNV…DPHE), 999–1021 (TINL…VADY), 1022–1044 (LVDS…NVVT), 1046–1068 (TYDF…VIQR), 1099–1121 (TNNI…RLYG), 1122–1143 (TEDV…AYAE), 1161–1183 (TTGT…GIEE), and 1188–1210 (TDYS…RLNG). A compositionally biased stretch (polar residues) spans 1215 to 1236 (VSDQPGTGQQATLEGTTGNDTL). The interval 1215 to 1238 (VSDQPGTGQQATLEGTTGNDTLGG) is disordered. Hemolysin-type calcium-binding repeat units follow at residues 1229–1243 (GTTG…DAHE), 1247–1263 (GLDG…NDIL), 1265–1281 (GGVG…ADTF), 1398–1414 (GHAG…DDIL), 1415–1432 (VGGA…ADVF), 1536–1552 (EGTA…ADEV), 1554–1571 (HGGS…ADVF), 1670–1681 (GGDGNDTLSGGS), 1688–1704 (GGAG…NDIL), and 1706–1722 (GGAG…SDIF).

Belongs to the D-mannuronate C5-epimerase family. The cofactor is Ca(2+).

The protein localises to the secreted. It catalyses the reaction [(1-&gt;4)-beta-D-mannuronosyl](n) = [alginate](n). It participates in glycan biosynthesis; alginate biosynthesis. With respect to regulation, inhibited by zinc. In terms of biological role, converts beta-D-mannuronic acid (M) to alpha-L-guluronic acid (G), producing a polymer with gel-forming capacity, required for the formation of the cyst coat. The sequence is that of Mannuronan C5-epimerase AlgE3 from Azotobacter vinelandii.